An 88-amino-acid chain; its full sequence is MENKKSHYFYVLLCQDGSFYGGYTTEPERRLTEHNSGTGAKYTRLAKRRPVIMIHTEKFETRSEATKAEAAFKKLTRKQKEQYLKTFH.

Residues 5–82 (KSHYFYVLLC…KKLTRKQKEQ (78 aa)) form the GIY-YIG domain.

The protein belongs to the UPF0213 family.

The chain is UPF0213 protein EF_2693 from Enterococcus faecalis (strain ATCC 700802 / V583).